The sequence spans 427 residues: Homeobox protein knotted-1-like 3 (427 aa).

Disordered stretches follow at residues 19–49 (QTHHQHQQYQSDQPDPNSKPPEPHHSFQPAP) and 272–291 (TGVSPGEGTSATMSDDEDDQ). Positions 272-284 (TGVSPGEGTSATM) are enriched in polar residues. In terms of domain architecture, ELK spans 330–350 (ELKHELKQGYKEKIVDIREEI). The homeobox; TALE-type DNA-binding region spans 351-414 (LRKRRAGKLP…NQRKRNWHSN (64 aa)).

Belongs to the TALE/KNOX homeobox family. Maximally expressed in sepals, petals and fully expanded leaves. Also expressed in other flower organs and in developing leaves. Low level expression in stem internodes.

Its subcellular location is the nucleus. This chain is Homeobox protein knotted-1-like 3, found in Malus domestica (Apple).